Consider the following 133-residue polypeptide: uncharacterized protein (133 aa).

The recombinase DNA-binding region spans 1–82 (MIDKIKKGYS…QKMLHDRQNF (82 aa)).

This is an uncharacterized protein from Bacillus phage phi105 (Bacteriophage phi-105).